The chain runs to 1209 residues: Phospholipid-transporting ATPase ID (1209 aa).

The span at 1–12 (MTVPKEMPEKWA) shows a compositional bias: basic and acidic residues. Residues 1 to 36 (MTVPKEMPEKWARAQAPPSWSRKKPSWGTEEERRAR) form a disordered region. At 1–64 (MTVPKEMPEK…TSKYNILTFL (64 aa)) the chain is on the cytoplasmic side. The helical transmembrane segment at 65–86 (PVNLFEQFQEVANTYFLFLLIL) threads the bilayer. At 87–92 (QLIPQI) the chain is on the exoplasmic loop side. A helical transmembrane segment spans residues 93–112 (SSLSWFTTIVPLVLVLTITA). Residues 113–295 (VKDATDDYFR…TSIDRLMNTL (183 aa)) are Cytoplasmic-facing. The helical transmembrane segment at 296–317 (VLWIFGFLVCMGVILAIGNAIW) threads the bilayer. Topologically, residues 318-346 (EHEVGMRFQVYLPWDEAVDSAFFSGFLSF) are exoplasmic loop. A helical membrane pass occupies residues 347-368 (WSYIIILNTVVPISLYVSVEVI). Topologically, residues 369–889 (RLGHSYFINW…GRWSYLRMCK (521 aa)) are cytoplasmic. The active-site 4-aspartylphosphate intermediate is the Asp-411. ATP is bound by residues Asp-411, Lys-412, Thr-413, Glu-515, Phe-556, Lys-579, Arg-613, Thr-693, Gly-694, Asp-695, Arg-807, and Lys-813. Residue Asp-411 participates in Mg(2+) binding. Position 413 (Thr-413) interacts with Mg(2+). Residue Asp-833 coordinates Mg(2+). Asn-836 and Asp-837 together coordinate ATP. Position 837 (Asp-837) interacts with Mg(2+). The chain crosses the membrane as a helical span at residues 890-910 (FLCYFFYKNFAFTMVHFWFGF). Topologically, residues 911–922 (FCGFSAQTVYDQ) are exoplasmic loop. Residues 923–942 (YFITLYNIVYTSLPVLAMGV) form a helical membrane-spanning segment. Over 943–972 (FDQDVPEQRSMEYPKLYEPGQLNLLFNKRE) the chain is Cytoplasmic. The chain crosses the membrane as a helical span at residues 973 to 994 (FFICIAQGIYTSVLMFFIPYGV). At 995 to 1008 (FADATRDDGTQLAD) the chain is on the exoplasmic loop side. The chain crosses the membrane as a helical span at residues 1009–1031 (YQSFAVTVATSLVIVVSVQIGLD). At 1032-1037 (TGYWTA) the chain is on the cytoplasmic side. A helical membrane pass occupies residues 1038–1058 (INHFFIWGSLAVYFAILFAMH). Over 1059-1078 (SNGLFDMFPNQFRFVGNAQN) the chain is Exoplasmic loop. Residues 1079 to 1103 (TLAQPTVWLTIVLTTVVCIMPVVAF) traverse the membrane as a helical segment. At 1104–1209 (RFLRLNLKPD…SGGADKPLKG (106 aa)) the chain is on the cytoplasmic side. Ser-1175 is subject to Phosphoserine. Residues 1181 to 1209 (SSSWIESLRRKKSDSASSPSGGADKPLKG) are disordered. A compositionally biased stretch (low complexity) spans 1195–1209 (SASSPSGGADKPLKG).

The protein belongs to the cation transport ATPase (P-type) (TC 3.A.3) family. Type IV subfamily. As to quaternary structure, component of a P4-ATPase flippase complex which consists of a catalytic alpha subunit ATP8B2 and an accessory beta subunit TMEM30A or TMEM30B. Mg(2+) serves as cofactor. As to expression, isoform 3 is ubiquitous, with highest expression in aorta, cerebellum and uterus.

It localises to the cell membrane. The protein resides in the endoplasmic reticulum membrane. The catalysed reaction is ATP + H2O + phospholipidSide 1 = ADP + phosphate + phospholipidSide 2.. It catalyses the reaction a 1,2-diacyl-sn-glycero-3-phosphocholine(out) + ATP + H2O = a 1,2-diacyl-sn-glycero-3-phosphocholine(in) + ADP + phosphate + H(+). Functionally, catalytic component of P4-ATPase flippase complex, which catalyzes the hydrolysis of ATP coupled to the transport of phosphatidylcholine (PC) from the outer to the inner leaflet of the plasma membrane. May contribute to the maintenance of membrane lipid asymmetry. The polypeptide is Phospholipid-transporting ATPase ID (Homo sapiens (Human)).